The chain runs to 151 residues: Probable cGMP 3',5'-cyclic phosphodiesterase subunit delta (151 aa).

This sequence belongs to the PDE6D/unc-119 family. As to quaternary structure, interacts with Pde6.

The protein localises to the nucleus. Its subcellular location is the cytoplasm. The chain is Probable cGMP 3',5'-cyclic phosphodiesterase subunit delta from Drosophila simulans (Fruit fly).